The primary structure comprises 156 residues: Nucleoredoxin-like protein 2 (156 aa).

The Thioredoxin domain maps to 9 to 147; it reads RLVTREGTVV…LACFQNWVEA (139 aa).

The protein belongs to the nucleoredoxin family. As to expression, both isoforms are expressed in retina, in the photoreceptor layer, and throughout the olfactory sensory neuron layer of the nasal epithelium, in neurons. Also expressed at low levels in brain and testis.

In terms of biological role, may be involved in the maintenance of both the function and the viability of sensory neurons, including photoreceptors and olfactory neurons. In the retina, isoform 1 may be required for rod function and isoform 2 for cone viability and function. This Mus musculus (Mouse) protein is Nucleoredoxin-like protein 2 (Nxnl2).